A 441-amino-acid chain; its full sequence is uncharacterized protein (441 aa).

Residue 78–85 (GPRQAGKT) coordinates ATP.

This is an uncharacterized protein from Mycobacterium bovis (strain ATCC BAA-935 / AF2122/97).